Here is a 252-residue protein sequence, read N- to C-terminus: MHAEFRTDRGRIRHHNEDNGGVFENKDNQPIVIVADGMGGHRAGDVASEMAVRLLSDAWKETTALLTAEEIETWLRKTIQEVNKEIVLYAESEMDLNGMGTTLVAAIMAQSQVVIANVGDSRGYLLQNHVLRQLTEDHSLVHELLRTGEISKEDAMNHPRKNILLRALGVEGKVEVDTFVVPFQTSDTLLLCSDGLTNMVPETEMEEILKSKRTLSEKADVFITKANSYGGEDNITVLLVERDLTQKGRDAS.

Residues 1–18 (MHAEFRTDRGRIRHHNED) show a composition bias toward basic and acidic residues. The disordered stretch occupies residues 1-23 (MHAEFRTDRGRIRHHNEDNGGVF). The PPM-type phosphatase domain maps to 2–242 (HAEFRTDRGR…DNITVLLVER (241 aa)). Positions 36, 37, 194, and 233 each coordinate Mn(2+).

The protein belongs to the PP2C family. It depends on Mn(2+) as a cofactor.

It localises to the cytoplasm. The protein localises to the membrane. The enzyme catalyses O-phospho-L-seryl-[protein] + H2O = L-seryl-[protein] + phosphate. It carries out the reaction O-phospho-L-threonyl-[protein] + H2O = L-threonyl-[protein] + phosphate. Activity not affected by inhibitors of phosphatases of the PPP family such as okadaic acid and cypermethrin, or by inhibitors of phosphatases of the PTP family such as sodium orthovanadate. Functionally, protein phosphatase that dephosphorylates EF-Tu. The sequence is that of Serine/threonine phosphatase stp (stp) from Listeria monocytogenes serovar 1/2a (strain ATCC BAA-679 / EGD-e).